A 279-amino-acid chain; its full sequence is Acetyl-coenzyme A carboxylase carboxyl transferase subunit beta (279 aa).

Residues 23 to 279 (LWWKCESCGA…LSQILGHLSS (257 aa)) enclose the CoA carboxyltransferase N-terminal domain. Cys-27, Cys-30, Cys-46, and Cys-49 together coordinate Zn(2+). The segment at 27 to 49 (CESCGAMLHKKQVEDHFYTCCEC) adopts a C4-type zinc-finger fold.

This sequence belongs to the AccD/PCCB family. In terms of assembly, acetyl-CoA carboxylase is a heterohexamer composed of biotin carboxyl carrier protein (AccB), biotin carboxylase (AccC) and two subunits each of ACCase subunit alpha (AccA) and ACCase subunit beta (AccD). Zn(2+) is required as a cofactor.

It is found in the cytoplasm. It catalyses the reaction N(6)-carboxybiotinyl-L-lysyl-[protein] + acetyl-CoA = N(6)-biotinyl-L-lysyl-[protein] + malonyl-CoA. The protein operates within lipid metabolism; malonyl-CoA biosynthesis; malonyl-CoA from acetyl-CoA: step 1/1. Component of the acetyl coenzyme A carboxylase (ACC) complex. Biotin carboxylase (BC) catalyzes the carboxylation of biotin on its carrier protein (BCCP) and then the CO(2) group is transferred by the transcarboxylase to acetyl-CoA to form malonyl-CoA. This is Acetyl-coenzyme A carboxylase carboxyl transferase subunit beta from Prosthecochloris aestuarii (strain DSM 271 / SK 413).